The following is a 478-amino-acid chain: Growth/differentiation factor 10 (478 aa).

A signal peptide spans 1–33 (MAHVPARTSPGPGPQLLLLLLPLFLLLLRDVAG). A propeptide spanning residues 34 to 368 (SHRAPAWSAL…EKTMQKARRK (335 aa)) is cleaved from the precursor. 3 N-linked (GlcNAc...) asparagine glycosylation sites follow: Asn-118, Asn-156, and Asn-281. Residues 266–319 (YDPFPAGDPEPRAAPNNSADPRVRRAAQATGPLQDNELPGLDERPPRAHAQHFH) form a disordered region. Disulfide bonds link Cys-376–Cys-443, Cys-405–Cys-475, and Cys-409–Cys-477. N-linked (GlcNAc...) asparagine glycosylation is present at Asn-469.

The protein belongs to the TGF-beta family. Homodimer or heterodimer. Can form a non-covalent complex of the mature region and the pro-region. Expressed in femur, brain, lung, skeletal muscle, pancreas and testis.

Its subcellular location is the secreted. In terms of biological role, growth factor involved in osteogenesis and adipogenesis. Plays an inhibitory role in the process of osteoblast differentiation via SMAD2/3 pathway. Plays an inhibitory role in the process of adipogenesis. This chain is Growth/differentiation factor 10, found in Homo sapiens (Human).